The sequence spans 496 residues: Putative ammonium transporter 1 member 5 (496 aa).

Helical transmembrane passes span 50–70 (LLFS…LCAG), 85–105 (VLDA…FAFG), 131–151 (FFLY…GSIA), 156–176 (FVAY…VVSH), 202–222 (FAGS…GALI), 246–266 (LVVL…PGSF), 284–306 (GIGR…TLFG), 314–334 (WNVT…TAGC), 336–356 (VVDP…LIGC), 369–389 (LEAA…VGLF), and 422–442 (LVQI…LFFI). The residue at position 485 (serine 485) is a Phosphoserine.

Belongs to the ammonia transporter channel (TC 1.A.11.2) family.

Its subcellular location is the membrane. In terms of biological role, involved in ammonium transport. The chain is Putative ammonium transporter 1 member 5 (AMT1-5) from Arabidopsis thaliana (Mouse-ear cress).